A 526-amino-acid chain; its full sequence is Probable feruloyl esterase B (526 aa).

Positions 1–18 (MARLSLLTLLALGSAALA) are cleaved as a signal peptide. Cystine bridges form between Cys27/Cys74 and Cys62/Cys113. Asn137 is a glycosylation site (N-linked (GlcNAc...) asparagine). Disulfide bonds link Cys186–Cys441, Cys255–Cys272, Cys281–Cys291, and Cys503–Cys525. Ser187 acts as the Acyl-ester intermediate in catalysis. Asn233 is a glycosylation site (N-linked (GlcNAc...) asparagine). Ca(2+) contacts are provided by Asp256, Asp259, Ala261, Asp263, and Ile265. An N-linked (GlcNAc...) asparagine glycan is attached at Asn311. Active-site charge relay system residues include Asp400 and His440. N-linked (GlcNAc...) asparagine glycosylation is present at Asn516.

Belongs to the tannase family.

The protein localises to the secreted. The enzyme catalyses feruloyl-polysaccharide + H2O = ferulate + polysaccharide.. Its function is as follows. Involved in degradation of plant cell walls. Hydrolyzes the feruloyl-arabinose ester bond in arabinoxylans as well as the feruloyl-galactose and feruloyl-arabinose ester bonds in pectin. This is Probable feruloyl esterase B (faeB) from Aspergillus clavatus (strain ATCC 1007 / CBS 513.65 / DSM 816 / NCTC 3887 / NRRL 1 / QM 1276 / 107).